Reading from the N-terminus, the 184-residue chain is Photosystem I assembly protein Ycf4 (184 aa).

A run of 2 helical transmembrane segments spans residues 22–42 and 57–77; these read FCWA…GTSS and ILFF…LFIS.

This sequence belongs to the Ycf4 family.

Its subcellular location is the plastid. It is found in the chloroplast thylakoid membrane. In terms of biological role, seems to be required for the assembly of the photosystem I complex. The chain is Photosystem I assembly protein Ycf4 from Phalaenopsis aphrodite subsp. formosana (Moth orchid).